The following is a 261-amino-acid chain: Chanoclavine-I dehydrogenase easD (261 aa).

The signal sequence occupies residues 1–20 (MPSMTSKVFAITGGASGIGA). Ile-18 is an NADP(+) binding site. A glycan (N-linked (GlcNAc...) asparagine) is linked at Asn-43. Positions 66, 132, 166, 170, and 201 each coordinate NADP(+). Tyr-166 serves as the catalytic Proton donor. Residue Lys-170 is the Lowers pKa of active site Tyr of the active site.

This sequence belongs to the short-chain dehydrogenases/reductases (SDR) family. Homotetramer.

The enzyme catalyses chanoclavine-I + NAD(+) = chanoclavine-I aldehyde + NADH + H(+). It participates in alkaloid biosynthesis; ergot alkaloid biosynthesis. Its function is as follows. Chanoclavine-I dehydrogenase; part of the gene cluster that mediates the biosynthesis of fungal ergot alkaloid. DmaW catalyzes the first step of ergot alkaloid biosynthesis by condensing dimethylallyl diphosphate (DMAP) and tryptophan to form 4-dimethylallyl-L-tryptophan. The second step is catalyzed by the methyltransferase easF that methylates 4-dimethylallyl-L-tryptophan in the presence of S-adenosyl-L-methionine, resulting in the formation of 4-dimethylallyl-L-abrine. The catalase easC and the FAD-dependent oxidoreductase easE then transform 4-dimethylallyl-L-abrine to chanoclavine-I which is further oxidized by easD in the presence of NAD(+), resulting in the formation of chanoclavine-I aldehyde. Agroclavine dehydrogenase easG then mediates the conversion of chanoclavine-I aldehyde to agroclavine via a non-enzymatic adduct reaction: the substrate is an iminium intermediate that is formed spontaneously from chanoclavine-I aldehyde in the presence of glutathione. The presence of easA is not required to complete this reaction. Further conversion of agroclavine to paspalic acid is a two-step process involving oxidation of agroclavine to elymoclavine and of elymoclavine to paspalic acid, the second step being performed by the elymoclavine oxidase cloA. Paspalic acid is then further converted to D-lysergic acid. Ergopeptines are assembled from D-lysergic acid and three different amino acids by the D-lysergyl-peptide-synthetases composed each of a monomudular and a trimodular nonribosomal peptide synthetase subunit. LpsB and lpsC encode the monomodular subunits responsible for D-lysergic acid activation and incorporation into the ergopeptine backbone. LpsA1 and A2 subunits encode the trimodular nonribosomal peptide synthetase assembling the tripeptide portion of ergopeptines. LpsA1 is responsible for formation of the major ergopeptine, ergotamine, and lpsA2 for alpha-ergocryptine, the minor ergopeptine of the total alkaloid mixture elaborated by C.purpurea. D-lysergyl-tripeptides are assembled by the nonribosomal peptide synthetases and released as N-(D-lysergyl-aminoacyl)-lactams. Cyclolization of the D-lysergyl-tripeptides is performed by the Fe(2+)/2-ketoglutarate-dependent dioxygenase easH which introduces a hydroxyl group into N-(D-lysergyl-aminoacyl)-lactam at alpha-C of the aminoacyl residue followed by spontaneous condensation with the terminal lactam carbonyl group. The chain is Chanoclavine-I dehydrogenase easD from Claviceps purpurea (strain 20.1) (Ergot fungus).